A 276-amino-acid polypeptide reads, in one-letter code: Large ribosomal subunit protein uL2 (276 aa).

The disordered stretch occupies residues 223 to 276; sequence GVAMNPVDHPHGGGEGRGKGHHPTSPWGLPTKGYKTRRGKRPSDKFIVRRRNEA. 2 stretches are compositionally biased toward basic and acidic residues: residues 230-240 and 263-276; these read DHPHGGGEGRG and RPSDKFIVRRRNEA.

It belongs to the universal ribosomal protein uL2 family. As to quaternary structure, part of the 50S ribosomal subunit. Forms a bridge to the 30S subunit in the 70S ribosome.

Functionally, one of the primary rRNA binding proteins. Required for association of the 30S and 50S subunits to form the 70S ribosome, for tRNA binding and peptide bond formation. It has been suggested to have peptidyltransferase activity; this is somewhat controversial. Makes several contacts with the 16S rRNA in the 70S ribosome. This is Large ribosomal subunit protein uL2 from Thermotoga petrophila (strain ATCC BAA-488 / DSM 13995 / JCM 10881 / RKU-1).